Consider the following 230-residue polypeptide: Probable dual specificity protein phosphatase DDB_G0283417 (230 aa).

The region spanning 78–230 (NNNYESINLY…LEIFEKELLF (153 aa)) is the Tyrosine-protein phosphatase domain. The active-site Phosphocysteine intermediate is the Cys-174.

The protein belongs to the protein-tyrosine phosphatase family. Non-receptor class dual specificity subfamily.

The catalysed reaction is O-phospho-L-tyrosyl-[protein] + H2O = L-tyrosyl-[protein] + phosphate. The enzyme catalyses O-phospho-L-seryl-[protein] + H2O = L-seryl-[protein] + phosphate. It carries out the reaction O-phospho-L-threonyl-[protein] + H2O = L-threonyl-[protein] + phosphate. Functionally, has a dual specificity toward Ser/Thr and Tyr-containing proteins. The sequence is that of Probable dual specificity protein phosphatase DDB_G0283417 from Dictyostelium discoideum (Social amoeba).